The chain runs to 273 residues: MDIVEIIKAIILGMVEGLTEFAPVSSTGHMIIVDDMWLKSQEFLGKYAANTFKVVIQLGSILAVVVVFKDRFIDLLGLRGRHRDGKPRLKLMQVIVGLIPAGVLGVLFEDYIDEHLFSTATVLIGLVLGALLMIAADVFAKKAPKAQTVDQITYKQALIVGLVQCLSLWPGFSRSGSTISGGVLVGMSHRAAADFTFIMAVPIMMGASVLSLLKNWQYFTIDALPFFTAGFISAFLFALISIRFFLKLINQIRLVPFAVYRIVLALVIYIVYF.

The next 8 membrane-spanning stretches (helical) occupy residues 3 to 23, 48 to 68, 92 to 112, 116 to 136, 152 to 172, 193 to 213, 220 to 240, and 252 to 272; these read IVEIIKAIILGMVEGLTEFAP, AANTFKVVIQLGSILAVVVVF, MQVIVGLIPAGVLGVLFEDYI, LFSTATVLIGLVLGALLMIAA, ITYKQALIVGLVQCLSLWPGF, ADFTFIMAVPIMMGASVLSLL, TIDALPFFTAGFISAFLFALI, and IRLVPFAVYRIVLALVIYIVY.

The protein belongs to the UppP family.

It is found in the cell membrane. It catalyses the reaction di-trans,octa-cis-undecaprenyl diphosphate + H2O = di-trans,octa-cis-undecaprenyl phosphate + phosphate + H(+). In terms of biological role, catalyzes the dephosphorylation of undecaprenyl diphosphate (UPP). Confers resistance to bacitracin. In Geobacillus sp. (strain WCH70), this protein is Undecaprenyl-diphosphatase.